The primary structure comprises 282 residues: Biotin synthase (282 aa).

The Radical SAM core domain occupies 1-228; it reads MQEIFLCSIS…NARLMVAGGR (228 aa). Positions 17, 21, and 24 each coordinate [4Fe-4S] cluster. [2Fe-2S] cluster-binding residues include cysteine 61, cysteine 96, cysteine 154, and arginine 221.

This sequence belongs to the radical SAM superfamily. Biotin synthase family. In terms of assembly, homodimer. It depends on [4Fe-4S] cluster as a cofactor. Requires [2Fe-2S] cluster as cofactor.

It carries out the reaction (4R,5S)-dethiobiotin + (sulfur carrier)-SH + 2 reduced [2Fe-2S]-[ferredoxin] + 2 S-adenosyl-L-methionine = (sulfur carrier)-H + biotin + 2 5'-deoxyadenosine + 2 L-methionine + 2 oxidized [2Fe-2S]-[ferredoxin]. It participates in cofactor biosynthesis; biotin biosynthesis; biotin from 7,8-diaminononanoate: step 2/2. Catalyzes the conversion of dethiobiotin (DTB) to biotin by the insertion of a sulfur atom into dethiobiotin via a radical-based mechanism. The polypeptide is Biotin synthase (Helicobacter pylori (strain J99 / ATCC 700824) (Campylobacter pylori J99)).